Here is a 146-residue protein sequence, read N- to C-terminus: Putative pre-16S rRNA nuclease (146 aa).

It belongs to the YqgF nuclease family.

It is found in the cytoplasm. Functionally, could be a nuclease involved in processing of the 5'-end of pre-16S rRNA. This is Putative pre-16S rRNA nuclease from Burkholderia pseudomallei (strain 668).